Reading from the N-terminus, the 447-residue chain is N-succinylarginine dihydrolase (447 aa).

Residues Ala-19–Ser-28, Asn-110, and His-137–Arg-138 contribute to the substrate site. Glu-174 is an active-site residue. Residue Arg-212 coordinates substrate. The active site involves His-248. Positions 250 and 359 each coordinate substrate. The active-site Nucleophile is the Cys-365.

It belongs to the succinylarginine dihydrolase family. As to quaternary structure, homodimer.

The enzyme catalyses N(2)-succinyl-L-arginine + 2 H2O + 2 H(+) = N(2)-succinyl-L-ornithine + 2 NH4(+) + CO2. It functions in the pathway amino-acid degradation; L-arginine degradation via AST pathway; L-glutamate and succinate from L-arginine: step 2/5. Functionally, catalyzes the hydrolysis of N(2)-succinylarginine into N(2)-succinylornithine, ammonia and CO(2). This chain is N-succinylarginine dihydrolase, found in Escherichia coli O8 (strain IAI1).